The sequence spans 489 residues: Glutamyl-tRNA(Gln) amidotransferase subunit A (489 aa).

Residues lysine 78 and serine 153 each act as charge relay system in the active site. Serine 177 serves as the catalytic Acyl-ester intermediate.

It belongs to the amidase family. GatA subfamily. In terms of assembly, heterotrimer of A, B and C subunits.

The catalysed reaction is L-glutamyl-tRNA(Gln) + L-glutamine + ATP + H2O = L-glutaminyl-tRNA(Gln) + L-glutamate + ADP + phosphate + H(+). Functionally, allows the formation of correctly charged Gln-tRNA(Gln) through the transamidation of misacylated Glu-tRNA(Gln) in organisms which lack glutaminyl-tRNA synthetase. The reaction takes place in the presence of glutamine and ATP through an activated gamma-phospho-Glu-tRNA(Gln). The sequence is that of Glutamyl-tRNA(Gln) amidotransferase subunit A from Nitratidesulfovibrio vulgaris (strain DP4) (Desulfovibrio vulgaris).